The following is a 282-amino-acid chain: Deoxyribonuclease-1 (282 aa).

A signal peptide spans 1–22 (MRGTRLMGLLLALAGLLQLGLS). N-linked (GlcNAc...) asparagine glycosylation is present at Asn-40. Residue Glu-100 is part of the active site. Cys-123 and Cys-126 form a disulfide bridge. Residue His-156 is part of the active site. Cys-195 and Cys-231 are disulfide-bonded.

The protein belongs to the DNase I family. It depends on Ca(2+) as a cofactor. Mg(2+) is required as a cofactor. In terms of processing, the only differences between the A and B forms and the C and D forms are in the compositions of the carbohydrate bound to Asn-40.

Its subcellular location is the secreted. It is found in the zymogen granule. It localises to the nucleus envelope. It catalyses the reaction Endonucleolytic cleavage to 5'-phosphodinucleotide and 5'-phosphooligonucleotide end-products.. Functionally, serum endocuclease secreted into body fluids by a wide variety of exocrine and endocrine organs. Expressed by non-hematopoietic tissues and preferentially cleaves protein-free DNA. Among other functions, seems to be involved in cell death by apoptosis. Binds specifically to G-actin and blocks actin polymerization. Together with DNASE1L3, plays a key role in degrading neutrophil extracellular traps (NETs). NETs are mainly composed of DNA fibers and are released by neutrophils to bind pathogens during inflammation. Degradation of intravascular NETs by DNASE1 and DNASE1L3 is required to prevent formation of clots that obstruct blood vessels and cause organ damage following inflammation. This Bos taurus (Bovine) protein is Deoxyribonuclease-1 (DNASE1).